We begin with the raw amino-acid sequence, 409 residues long: Na(+)-translocating NADH-quinone reductase subunit F (409 aa).

The helical transmembrane segment at 5-25 (FIFGIGAFTAIVLVLAVVILI) threads the bilayer. Residues 34 to 128 (GDITISINDD…SMDVELPEEV (95 aa)) enclose the 2Fe-2S ferredoxin-type domain. Cys-71, Cys-77, Cys-80, and Cys-112 together coordinate [2Fe-2S] cluster. The region spanning 131–271 (VKKWECTVIS…SGPFGEFFAK (141 aa)) is the FAD-binding FR-type domain.

It belongs to the NqrF family. In terms of assembly, composed of six subunits; NqrA, NqrB, NqrC, NqrD, NqrE and NqrF. Requires [2Fe-2S] cluster as cofactor. FAD serves as cofactor.

It localises to the cell inner membrane. The enzyme catalyses a ubiquinone + n Na(+)(in) + NADH + H(+) = a ubiquinol + n Na(+)(out) + NAD(+). NQR complex catalyzes the reduction of ubiquinone-1 to ubiquinol by two successive reactions, coupled with the transport of Na(+) ions from the cytoplasm to the periplasm. The first step is catalyzed by NqrF, which accepts electrons from NADH and reduces ubiquinone-1 to ubisemiquinone by a one-electron transfer pathway. This is Na(+)-translocating NADH-quinone reductase subunit F from Actinobacillus succinogenes (strain ATCC 55618 / DSM 22257 / CCUG 43843 / 130Z).